Reading from the N-terminus, the 172-residue chain is Bifunctional protein PyrR (172 aa).

Positions 90 to 102 match the PRPP-binding motif; it reads LVLVDDVLMSGRT.

This sequence belongs to the purine/pyrimidine phosphoribosyltransferase family. PyrR subfamily.

It catalyses the reaction UMP + diphosphate = 5-phospho-alpha-D-ribose 1-diphosphate + uracil. Regulates the transcription of the pyrimidine nucleotide (pyr) operon in response to exogenous pyrimidines. In terms of biological role, also displays a weak uracil phosphoribosyltransferase activity which is not physiologically significant. This is Bifunctional protein PyrR from Pseudomonas entomophila (strain L48).